We begin with the raw amino-acid sequence, 238 residues long: Probable transcriptional regulatory protein Mmwyl1_2868 (238 aa).

The protein belongs to the TACO1 family.

The protein resides in the cytoplasm. In Marinomonas sp. (strain MWYL1), this protein is Probable transcriptional regulatory protein Mmwyl1_2868.